The following is a 163-amino-acid chain: 2-C-methyl-D-erythritol 2,4-cyclodiphosphate synthase (163 aa).

A divalent metal cation-binding residues include D10 and H12. Residues 10–12 and 36–37 each bind 4-CDP-2-C-methyl-D-erythritol 2-phosphate; these read DVH and HS. An a divalent metal cation-binding site is contributed by H44. 4-CDP-2-C-methyl-D-erythritol 2-phosphate-binding positions include 58-60, 63-67, 134-137, F141, and R144; these read DIG, FPDND, and TTTE.

This sequence belongs to the IspF family. As to quaternary structure, homotrimer. A divalent metal cation is required as a cofactor.

The catalysed reaction is 4-CDP-2-C-methyl-D-erythritol 2-phosphate = 2-C-methyl-D-erythritol 2,4-cyclic diphosphate + CMP. The protein operates within isoprenoid biosynthesis; isopentenyl diphosphate biosynthesis via DXP pathway; isopentenyl diphosphate from 1-deoxy-D-xylulose 5-phosphate: step 4/6. Functionally, involved in the biosynthesis of isopentenyl diphosphate (IPP) and dimethylallyl diphosphate (DMAPP), two major building blocks of isoprenoid compounds. Catalyzes the conversion of 4-diphosphocytidyl-2-C-methyl-D-erythritol 2-phosphate (CDP-ME2P) to 2-C-methyl-D-erythritol 2,4-cyclodiphosphate (ME-CPP) with a corresponding release of cytidine 5-monophosphate (CMP). The protein is 2-C-methyl-D-erythritol 2,4-cyclodiphosphate synthase of Carboxydothermus hydrogenoformans (strain ATCC BAA-161 / DSM 6008 / Z-2901).